The following is a 294-amino-acid chain: Protoheme IX farnesyltransferase (294 aa).

9 helical membrane passes run 13-33, 35-55, 84-104, 107-127, 132-152, 162-182, 208-228, 229-249, and 264-284; these read IIFG…KGVI, YPLF…GCVF, ISLI…YAAA, LAMQ…SLYM, VYGT…GYCA, LILL…IAIF, IILY…SGYA, GYKY…MALS, and FIFS…DPHV.

This sequence belongs to the UbiA prenyltransferase family. Protoheme IX farnesyltransferase subfamily.

The protein localises to the cell inner membrane. It carries out the reaction heme b + (2E,6E)-farnesyl diphosphate + H2O = Fe(II)-heme o + diphosphate. Its pathway is porphyrin-containing compound metabolism; heme O biosynthesis; heme O from protoheme: step 1/1. Its function is as follows. Converts heme B (protoheme IX) to heme O by substitution of the vinyl group on carbon 2 of heme B porphyrin ring with a hydroxyethyl farnesyl side group. The protein is Protoheme IX farnesyltransferase of Photorhabdus laumondii subsp. laumondii (strain DSM 15139 / CIP 105565 / TT01) (Photorhabdus luminescens subsp. laumondii).